A 726-amino-acid chain; its full sequence is Netrin-A (726 aa).

Residues 1–29 (MIRGILLLLLGTTRFSPIQCISNDVYFKM) form the signal peptide. Residues 46 to 312 (EPRACIPDFV…AISDFSVGGR (267 aa)) form the Laminin N-terminal domain. Residues N108, N112, and N127 are each glycosylated (N-linked (GlcNAc...) asparagine). 12 disulfides stabilise this stretch: C313–C322, C315–C332, C334–C343, C346–C366, C369–C378, C371–C396, C399–C408, C411–C429, C432–C444, C434–C451, C453–C462, and C465–C479. 3 Laminin EGF-like domains span residues 313–368 (CKCN…ECKE), 369–431 (CNCN…VCKA), and 432–481 (CDCH…PCIK). Residue N445 is glycosylated (N-linked (GlcNAc...) asparagine). A disordered region spans residues 490–516 (LDTQNTAPEPDEPESSPGSGGDRNGAA). 2 disulfide bridges follow: C533/C671 and C549/C725. Residues 533 to 725 (CGKCRVSTKR…KRFQRRARTC (193 aa)) form the NTR domain. Residues N652 and N679 are each glycosylated (N-linked (GlcNAc...) asparagine).

As to expression, at the midline of developing CNS at the time of commissure formation and in different subsets of neurons, muscles, and epidermal patches.

It localises to the secreted. The protein resides in the extracellular space. Its subcellular location is the extracellular matrix. Its function is as follows. Netrins control guidance of CNS commissural axons at the midline and peripheral motor axons to their target muscles. The sequence is that of Netrin-A (NetA) from Drosophila melanogaster (Fruit fly).